The sequence spans 51 residues: Large ribosomal subunit protein eL39 (51 aa).

The protein belongs to the eukaryotic ribosomal protein eL39 family.

The chain is Large ribosomal subunit protein eL39 from Thermococcus sibiricus (strain DSM 12597 / MM 739).